Consider the following 193-residue polypeptide: Adenine phosphoribosyltransferase (193 aa).

This sequence belongs to the purine/pyrimidine phosphoribosyltransferase family. Homodimer.

It localises to the cytoplasm. The enzyme catalyses AMP + diphosphate = 5-phospho-alpha-D-ribose 1-diphosphate + adenine. The protein operates within purine metabolism; AMP biosynthesis via salvage pathway; AMP from adenine: step 1/1. Catalyzes a salvage reaction resulting in the formation of AMP, that is energically less costly than de novo synthesis. This chain is Adenine phosphoribosyltransferase, found in Bifidobacterium longum (strain NCC 2705).